Consider the following 191-residue polypeptide: Calcium-activated potassium channel subunit beta-1 (191 aa).

The Cytoplasmic portion of the chain corresponds to 1 to 15; that stretch reads MGKKLVMAQKRGETR. A helical membrane pass occupies residues 16 to 36; that stretch reads ALCLGVAMVMCAVIAYYILGT. At 37–157 the chain is on the extracellular side; the sequence is TMLPLYQKSV…YRRLYGPQTL (121 aa). N-linked (GlcNAc...) asparagine glycosylation is found at asparagine 80 and asparagine 142. The helical transmembrane segment at 158–178 threads the bilayer; it reads LFSLFWPTFLLTGGLLIIAMV. Topologically, residues 179 to 191 are cytoplasmic; the sequence is KINQSLSILAAQR.

It belongs to the KCNMB (TC 8.A.14.1) family. KCNMB1 subfamily. Interacts with KCNMA1 tetramer. There are probably 4 molecules of KCMNB1 per KCNMA1 tetramer. Post-translationally, N-glycosylated.

It localises to the membrane. Functionally, regulatory subunit of the calcium activated potassium KCNMA1 (maxiK) channel. Modulates the calcium sensitivity and gating kinetics of KCNMA1, thereby contributing to KCNMA1 channel diversity. Increases the apparent Ca(2+)/voltage sensitivity of the KCNMA1 channel. It also modifies KCNMA1 channel kinetics and alters its pharmacological properties. It slows down the activation and the deactivation kinetics of the channel. Acts as a negative regulator of smooth muscle contraction by enhancing the calcium sensitivity to KCNMA1. Its presence is also a requirement for internal binding of the KCNMA1 channel opener dehydrosoyasaponin I (DHS-1) triterpene glycoside and for external binding of the agonist hormone 17-beta-estradiol (E2). Increases the binding activity of charybdotoxin (CTX) toxin to KCNMA1 peptide blocker by increasing the CTX association rate and decreasing the dissociation rate. The polypeptide is Calcium-activated potassium channel subunit beta-1 (KCNMB1) (Canis lupus familiaris (Dog)).